The primary structure comprises 323 residues: tRNA dimethylallyltransferase (323 aa).

12-19 (GPTAAGKT) contributes to the ATP binding site. Substrate is bound at residue 14 to 19 (TAAGKT). Interaction with substrate tRNA regions lie at residues 37–40 (DSAL) and 161–165 (QRLMR).

This sequence belongs to the IPP transferase family. Monomer. Requires Mg(2+) as cofactor.

The enzyme catalyses adenosine(37) in tRNA + dimethylallyl diphosphate = N(6)-dimethylallyladenosine(37) in tRNA + diphosphate. Functionally, catalyzes the transfer of a dimethylallyl group onto the adenine at position 37 in tRNAs that read codons beginning with uridine, leading to the formation of N6-(dimethylallyl)adenosine (i(6)A). The sequence is that of tRNA dimethylallyltransferase from Pseudomonas paraeruginosa (strain DSM 24068 / PA7) (Pseudomonas aeruginosa (strain PA7)).